A 122-amino-acid chain; its full sequence is Large ribosomal subunit protein uL14 (122 aa).

This sequence belongs to the universal ribosomal protein uL14 family. In terms of assembly, part of the 50S ribosomal subunit. Forms a cluster with proteins L3 and L19. In the 70S ribosome, L14 and L19 interact and together make contacts with the 16S rRNA in bridges B5 and B8.

Functionally, binds to 23S rRNA. Forms part of two intersubunit bridges in the 70S ribosome. This chain is Large ribosomal subunit protein uL14, found in Brucella abortus (strain 2308).